The sequence spans 325 residues: Protein SAR DEFICIENT 4 (325 aa).

The N-terminal 42 residues, 1–42, are a transit peptide targeting the chloroplast; the sequence is MAALPVFIPAESFPSILSHETLINHFRTNLPKHSSTITSPVR.

This sequence belongs to the ornithine cyclodeaminase/mu-crystallin family.

Its subcellular location is the plastid. The protein resides in the chloroplast. In terms of biological role, involved in the biosynthesis of pipecolate (Pip), a metabolite that orchestrates defense amplification, positive regulation of salicylic acid (SA) biosynthesis, and priming to guarantee effective local resistance induction and the establishment of systemic acquired resistance (SAR). Converts delta-(1)-piperideine-2-carboxylate (P2C) to Pip. Mediates reduction of P2C and biosynthesis of Pip in systemic tissue and contributes to SAR establishment. Does not possess ornithine cyclodeaminase activity in vitro. The protein is Protein SAR DEFICIENT 4 of Arabidopsis thaliana (Mouse-ear cress).